A 37-amino-acid polypeptide reads, in one-letter code: Large ribosomal subunit protein bL36 (37 aa).

It belongs to the bacterial ribosomal protein bL36 family.

The chain is Large ribosomal subunit protein bL36 from Psychromonas ingrahamii (strain DSM 17664 / CCUG 51855 / 37).